Consider the following 69-residue polypeptide: Cytochrome c oxidase subunit 8A, mitochondrial (69 aa).

The transit peptide at 1–25 (MYVVTPLLLRGLTGSARRLPVPRAQ) directs the protein to the mitochondrion. Positions 2–19 (YVVTPLLLRGLTGSARRL) match the SIFI-degron motif. Over 26–36 (VHSMPPEQKLG) the chain is Mitochondrial matrix. A helical membrane pass occupies residues 37 to 60 (VLELAIGFTSCMVTFLLPAGWIMS). Over 61–69 (HLESYKKRG) the chain is Mitochondrial intermembrane.

It belongs to the cytochrome c oxidase VIII family. Component of the cytochrome c oxidase (complex IV, CIV), a multisubunit enzyme composed of 14 subunits. The complex is composed of a catalytic core of 3 subunits MT-CO1, MT-CO2 and MT-CO3, encoded in the mitochondrial DNA, and 11 supernumerary subunits COX4I, COX5A, COX5B, COX6A, COX6B, COX6C, COX7A, COX7B, COX7C, COX8 and NDUFA4, which are encoded in the nuclear genome. The complex exists as a monomer or a dimer and forms supercomplexes (SCs) in the inner mitochondrial membrane with NADH-ubiquinone oxidoreductase (complex I, CI) and ubiquinol-cytochrome c oxidoreductase (cytochrome b-c1 complex, complex III, CIII), resulting in different assemblies (supercomplex SCI(1)III(2)IV(1) and megacomplex MCI(2)III(2)IV(2)). In terms of processing, in response to mitochondrial stress, the precursor protein is ubiquitinated by the SIFI complex in the cytoplasm before mitochondrial import, leading to its degradation. Within the SIFI complex, UBR4 initiates ubiquitin chain that are further elongated or branched by KCMF1.

It is found in the mitochondrion inner membrane. Its pathway is energy metabolism; oxidative phosphorylation. In terms of biological role, component of the cytochrome c oxidase, the last enzyme in the mitochondrial electron transport chain which drives oxidative phosphorylation. The respiratory chain contains 3 multisubunit complexes succinate dehydrogenase (complex II, CII), ubiquinol-cytochrome c oxidoreductase (cytochrome b-c1 complex, complex III, CIII) and cytochrome c oxidase (complex IV, CIV), that cooperate to transfer electrons derived from NADH and succinate to molecular oxygen, creating an electrochemical gradient over the inner membrane that drives transmembrane transport and the ATP synthase. Cytochrome c oxidase is the component of the respiratory chain that catalyzes the reduction of oxygen to water. Electrons originating from reduced cytochrome c in the intermembrane space (IMS) are transferred via the dinuclear copper A center (CU(A)) of subunit 2 and heme A of subunit 1 to the active site in subunit 1, a binuclear center (BNC) formed by heme A3 and copper B (CU(B)). The BNC reduces molecular oxygen to 2 water molecules using 4 electrons from cytochrome c in the IMS and 4 protons from the mitochondrial matrix. This is Cytochrome c oxidase subunit 8A, mitochondrial (COX8A) from Ateles belzebuth (White-bellied spider monkey).